The primary structure comprises 339 residues: MIDKIKGHIADVESFNAKTKDEIEAFRIKYLGKKGILNDFFAEFKNVPNEQKKEFGQVINELKTAAQVKVNALKEDLENNQEEKGVYGDLSRPAEPVEIGARHPISIVKNQITEIFSNIGFNVSEGPEMEDDWHNFTALNLPEYHPARDMQDTFFIQTDPDILLRTHTSSVQVRYMEENKPPIRTISPGRVFRNEAISARSHCIFHQVEGLYIDKDVSFADMKQTILYFTEQLFGKSKIRLRPSYFPFTEPSAEVDVYWGLETETDYRITKGTGWLEIMGCGMVDPNVLRNCNIDPKEYSGFAFGMGIERIAMLLYQIEDIRMFYENDLRFLEQFKSAL.

Residue glutamate 250 coordinates Mg(2+).

The protein belongs to the class-II aminoacyl-tRNA synthetase family. Phe-tRNA synthetase alpha subunit type 1 subfamily. Tetramer of two alpha and two beta subunits. Mg(2+) serves as cofactor.

It is found in the cytoplasm. It catalyses the reaction tRNA(Phe) + L-phenylalanine + ATP = L-phenylalanyl-tRNA(Phe) + AMP + diphosphate + H(+). In Christiangramia forsetii (strain DSM 17595 / CGMCC 1.15422 / KT0803) (Gramella forsetii), this protein is Phenylalanine--tRNA ligase alpha subunit.